The following is a 283-amino-acid chain: Urease accessory protein UreD (283 aa).

Residues 1 to 21 (MTQTQPVGTLRLTIDDQGPQG) are disordered.

This sequence belongs to the UreD family. UreD, UreF and UreG form a complex that acts as a GTP-hydrolysis-dependent molecular chaperone, activating the urease apoprotein by helping to assemble the nickel containing metallocenter of UreC. The UreE protein probably delivers the nickel.

The protein resides in the cytoplasm. Probably acts in the maturation of urease via the functional incorporation of the urease nickel metallocenter. Required for urease expression. This is Urease accessory protein UreD from Corynebacterium glutamicum (strain ATCC 13032 / DSM 20300 / JCM 1318 / BCRC 11384 / CCUG 27702 / LMG 3730 / NBRC 12168 / NCIMB 10025 / NRRL B-2784 / 534).